Consider the following 955-residue polypeptide: 4-alpha-glucanotransferase DPE2 (955 aa).

An N-acetylmethionine modification is found at M1. CBM20 domains follow at residues 13 to 122 and 157 to 270; these read KSSK…LWQS and SDQD…PWRG. Residues 925-955 are disordered; the sequence is SGRSVPANVSGEDINKSRGEVIANGSTKPNP.

It belongs to the disproportionating enzyme family.

It is found in the cytoplasm. The protein resides in the cytosol. The catalysed reaction is Transfers a segment of a (1-&gt;4)-alpha-D-glucan to a new position in an acceptor, which may be glucose or a (1-&gt;4)-alpha-D-glucan.. Inactivated in response to cold stress. In terms of biological role, cytosolic alpha-glucanotransferase essential for the cytosolic metabolism of maltose, an intermediate on the pathway by which starch is converted to sucrose in leaves at night. Metabolizes maltose exported from the chloroplast and is specific for beta-maltose. May play a role in freezing tolerance. Temperature drop induces inactivation of DPE2 that leads to rapid accumulation of maltose, a solute that protects cells from freezing damage. This is 4-alpha-glucanotransferase DPE2 (DPE2) from Arabidopsis thaliana (Mouse-ear cress).